A 792-amino-acid chain; its full sequence is Ribosome biogenesis protein BOP1 homolog (792 aa).

A compositionally biased stretch (basic residues) spans 1–11; that stretch reads MTKKRTVKRKV. The segment at 1–167 is disordered; it reads MTKKRTVKRK…ESDTSDEEDI (167 aa). 4 stretches are compositionally biased toward acidic residues: residues 44–53, 60–72, 82–117, and 157–166; these read EDTTDDEGID, SSEDLEFESDEEG, EAEEGEDDQDEDDDEDEDEGEDEDDDSDDDSEESDA, and EESDTSDEED. 7 WD repeats span residues 453-494, 496-534, 578-620, 623-661, 664-703, 707-746, and 762-792; these read GHTD…RTIE, NDVVRCVAWCPNAKLSIIAVATGSRLLLINPKVGDKLLI, THFK…SQIP, KSKGLIQCVLFHPVKPCFFVATQHNIRIYDLVKQELIKK, TNSKWISGMSIHPKGDNLLVSTYDKKMLWFDLDLSTKPYQ, LHRNAVRSVAFHLRYPLFASGSDDQAVIVSHGMVYNDLLQ, and RDEFGVLDVTWHPVQPWVFSTGADCTIRLYT.

Belongs to the WD repeat BOP1/ERB1 family.

The protein resides in the nucleus. It is found in the nucleolus. The protein localises to the nucleoplasm. Required for maturation of ribosomal RNAs and formation of the large ribosomal subunit. In Drosophila mojavensis (Fruit fly), this protein is Ribosome biogenesis protein BOP1 homolog.